Here is a 1030-residue protein sequence, read N- to C-terminus: Halotolerance protein 9 (1030 aa).

A DNA-binding region (zn(2)-C6 fungal-type) is located at residues 136 to 166; the sequence is CDHCRKRKIRCDEVDQQTKKCSNCIKFQLPC. Positions 185 to 208 are disordered; that stretch reads HHATPGESLQTSNSISNPVASSSV. Residues 196 to 208 show a composition bias toward low complexity; the sequence is SNSISNPVASSSV. Residues S221 and S937 each carry the phosphoserine modification.

The protein resides in the cytoplasm. Its subcellular location is the nucleus. Its function is as follows. Putative transcription factor involved in halotolerance. This chain is Halotolerance protein 9 (HAL9), found in Saccharomyces cerevisiae (strain ATCC 204508 / S288c) (Baker's yeast).